The following is a 615-amino-acid chain: ATP-dependent RNA helicase mrh4, mitochondrial (615 aa).

A mitochondrion-targeting transit peptide spans 1–37 (MLRPKAGKCLLCSFRAAQKPVSQKWPSRALSMRTRLP). The tract at residues 21-108 (VSQKWPSRAL…HRDRDDKKDR (88 aa)) is disordered. Residues 90 to 108 (QERRTSRLDHRDRDDKKDR) are compositionally biased toward basic and acidic residues. Residues 138 to 171 (QSFEQFALLDSVKQAIFQQALPELKEHVPTPVQR) carry the Q motif motif. Residues 184 to 395 (RRPKSEMEQY…RKRFPDINRL (212 aa)) enclose the Helicase ATP-binding domain. ATP is bound at residue 197 to 204 (AETGSGKT). The short motif at 342 to 345 (DEAD) is the DEAD box element. A Helicase C-terminal domain is found at 444–615 (PVKGLMDVKR…EGMFEGKALI (172 aa)).

Belongs to the DEAD box helicase family. MRH4 subfamily.

It localises to the mitochondrion. It carries out the reaction ATP + H2O = ADP + phosphate + H(+). In terms of biological role, ATP-binding RNA helicase involved in mitochondrial RNA metabolism. Required for maintenance of mitochondrial DNA. The chain is ATP-dependent RNA helicase mrh4, mitochondrial (mrh4) from Sclerotinia sclerotiorum (strain ATCC 18683 / 1980 / Ss-1) (White mold).